Here is a 297-residue protein sequence, read N- to C-terminus: 33 kDa chaperonin (297 aa).

2 cysteine pairs are disulfide-bonded: C239–C241 and C272–C275.

This sequence belongs to the HSP33 family. Post-translationally, under oxidizing conditions two disulfide bonds are formed involving the reactive cysteines. Under reducing conditions zinc is bound to the reactive cysteines and the protein is inactive.

It localises to the cytoplasm. Its function is as follows. Redox regulated molecular chaperone. Protects both thermally unfolding and oxidatively damaged proteins from irreversible aggregation. Plays an important role in the bacterial defense system toward oxidative stress. The polypeptide is 33 kDa chaperonin (Synechococcus elongatus (strain ATCC 33912 / PCC 7942 / FACHB-805) (Anacystis nidulans R2)).